We begin with the raw amino-acid sequence, 273 residues long: DnaJ homolog subfamily C member 27 (273 aa).

The tract at residues 1–18 (MESNVPKRKEPLKSLRIK) is required for interaction with MAPK1. Residues 23–30 (GNAEVGKS), 71–75 (DMAGH), and 134–137 (NKID) contribute to the GTP site. The J domain maps to 217–273 (DSWEMLGVRPGASREEVNKAYRKLAVLLHPDKCVAPGSEDAFKAVVNARTALLKNIK).

The protein belongs to the small GTPase superfamily. Rab family. In terms of assembly, interacts directly with MAPK1 (wild-type and kinase-deficient forms). Interacts directly (in GTP-bound form) with MAP2K1 (wild-type and kinase-deficient forms).

It is found in the nucleus. Functionally, GTPase which can activate the MEK/ERK pathway and induce cell transformation when overexpressed. May act as a nuclear scaffold for MAPK1, probably by association with MAPK1 nuclear export signal leading to enhanced ERK1/ERK2 signaling. In Rattus norvegicus (Rat), this protein is DnaJ homolog subfamily C member 27 (Dnajc27).